The following is a 1603-amino-acid chain: Gag-Pol polyprotein (1603 aa).

Residues 128–141 (VGETTVQRDAKMAP) are compositionally biased toward basic and acidic residues. The tract at residues 128–150 (VGETTVQRDAKMAPEETATPKTV) is disordered. Positions 172-175 (PPPY) match the PPXY motif motif. Positions 180-184 (LYPSL) match the LYPX(n)L motif motif. The segment at 181 to 215 (YPSLAGVGEQQGQGGDTPRGAEQPRAEPGHAGLAP) is disordered. A Nuclear export signal motif is present at residues 219-229 (LTDWARIREEL). 2 CCHC-type zinc fingers span residues 507-524 (RLCY…QCPK) and 533-550 (ERCQ…QCRR). A disordered region spans residues 544-571 (NAKQCRRRDSNQGQRPGRGLSSGPWPVS). In terms of domain architecture, Peptidase A2 spans 609–690 (ITALLDSGAD…VRGSILGRDC (82 aa)). Asp614 (for protease activity; shared with dimeric partner) is an active-site residue. The Reverse transcriptase domain maps to 750–938 (LQLGHIEPSL…PGVQYLGYKL (189 aa)). The Mg(2+) site is built by Asp815, Asp890, Asp891, Asp1158, Glu1192, Asp1213, and Asp1272. The RNase H type-1 domain maps to 1149-1280 (PVPGPTVFTD…ADSQATFQAY (132 aa)). The segment at 1280–1321 (YPLREAKDLHTTLHIGPRALSKACNISMQQAREVVQTCPHCN) adopts an Integrase-type zinc-finger fold. Zn(2+) contacts are provided by His1289, His1293, Cys1317, and Cys1320. Residues 1333 to 1496 (RGLGPLQIWQ…TPVQKHWRPT (164 aa)) enclose the Integrase catalytic domain. Mg(2+) contacts are provided by Asp1344, Asp1401, and Glu1437. The segment at residues 1502–1550 (PPVKIRIETGEWEKGWNVLVWGRGYAAVKNRDTDKVIWVPSRKVKPDIT) is a DNA-binding region (integrase-type). Residues 1548-1567 (DITQKDEVTKKDEASPLFAG) are involved in homooctamerization. Over residues 1549–1561 (ITQKDEVTKKDEA) the composition is skewed to basic and acidic residues. The tract at residues 1549 to 1603 (ITQKDEVTKKDEASPLFAGSSDWIPWGDEQEGLQEEAASNKQEGPGEDTLAANES) is disordered.

As to quaternary structure, active as a homodimer. In terms of assembly, homodimer. Homomultimer. Homohexamer. Homodimer; further associates as a homooctamer. As to quaternary structure, heterodimer of alpha and beta subunits. Three forms of RT exist: alpha-alpha (alpha-Pol), beta-beta (beta-Pol), and alpha-beta, with the major form being the heterodimer. Both the polymerase and RNase H active sites are located in the alpha subunit of heterodimeric RT alpha-beta. It depends on Mg(2+) as a cofactor. Mn(2+) is required as a cofactor. Post-translationally, specific enzymatic cleavages in vivo yield mature proteins. In terms of processing, capsid protein p27: The cleavage at the C-terminus is slowly trimmed by the viral protease, sometimes being cut internally thereby generating the short version of the capsid protein and a capsid protein C-terminally extended by 3 amino acids in a ratio of 2:1.

Its subcellular location is the virion. The catalysed reaction is DNA(n) + a 2'-deoxyribonucleoside 5'-triphosphate = DNA(n+1) + diphosphate. It carries out the reaction Endonucleolytic cleavage to 5'-phosphomonoester.. Capsid protein p27: Self-associates to form the irregular polyhedron core composed of hexamers and pentamers, that encapsulates the genomic RNA-nucleocapsid complex. Assembles as a tube in vitro. Binds to inositol hexakisphosphate (IP6), which allows the assembly of the polyhedral capsid. In terms of biological role, plays a role in the oligomerization of the Gag polyprotein and in the stabilization of the immature particle. Essential layering element during tube assembly. Allows the cooperative binging of Gag to the host plasma membrane. Its function is as follows. Binds strongly to viral nucleic acids and promotes their packaging. Plays a role in the maturation-stabilization of the viral dimeric RNA via highly structured zinc-binding motifs. Functionally, the aspartyl protease mediates proteolytic cleavages of Gag and Gag-Pol polyproteins during or shortly after the release of the virion from the plasma membrane. Cleavages take place as an ordered, step-wise cascade to yield mature proteins. This process is called maturation. Displays maximal activity during the budding process just prior to particle release from the cell. Catalyzes viral DNA integration into the host chromosome, by performing a series of DNA cutting and joining reactions. This recombination event is an essential step in the viral replication cycle. Has a strong preference for using the 3'-OH at the viral DNA end as a nucleophile. This Rous sarcoma virus subgroup B (strain Schmidt-Ruppin) (RSV-SR-B) protein is Gag-Pol polyprotein (gag-pol).